Reading from the N-terminus, the 542-residue chain is MGAYLSQPNTVKCSGDGVGAPRLPLPYGFSAMQGWRVSMEDAHNCIPELDNETAMFSVYDGHGGEEVALYCAKYLPDIIKDQKAYKEGKLQKALQDAFLAIDAKLTTEEVIKELAQIAGRPTEDEDDKDKVADEDDVDNEEAALLHEEATMTIEELLTRYGQNCQKVPPHTKSGIGTGDEPGPQGLNGEAGPEDPSRETPSQENGPTAKGHTGFSSNSEHGTEAGQISEPGTATGEAGPSCSSASDKLPRVAKSKFFEDSEDESDEVEEEEDDSEECSEDEDGYSSEEAENEEDEDDTEEAEEDDDEEMMVPGMEGKEEPGSDSGTTAVVALIRGKQLIVANAGDSRCVVSEAGKALDMSYDHKPEDEVELARIKNAGGKVTMDGRVNGGLNLSRAIGDHFYKRNKNLPPQEQMISALPDIKVLTLTDDHEFMVIACDGIWNVMSSQEVVDFIQSKISQRDENGELRLLSSIVEELLDQCLAPDTSGDGTGCDNMTCIIICFKPRNTVELQAESGKRKLEEALSTEGAEDTGNSDKKKAKRD.

Glycine 2 is lipidated: N-myristoyl glycine. Arginine 22 carries the omega-N-methylarginine modification. Residues proline 26 to phenylalanine 502 enclose the PPM-type phosphatase domain. Residues aspartate 60 and glycine 61 each coordinate Mn(2+). Disordered regions lie at residues isoleucine 117–aspartate 136 and cysteine 164–glycine 325. Threonine 122 is modified (phosphothreonine). 2 stretches are compositionally biased toward acidic residues: residues glutamate 123 to aspartate 136 and aspartate 259 to methionine 309. An N6-acetyllysine modification is found at lysine 380. Aspartate 438 and aspartate 493 together coordinate Mn(2+). Residues glutamate 513 to aspartate 542 are disordered. Serine 524 carries the post-translational modification Phosphoserine.

It belongs to the PP2C family. As to quaternary structure, interacts with NOL3; may dephosphorylate NOL3. Mg(2+) is required as a cofactor. The cofactor is Mn(2+). Highly expressed in testis. Low level of expression in kidney. Also expressed in a number of tissues undergoing proliferation including embryo, uterus at pregnancy, placenta, and ovaries.

Its subcellular location is the nucleus. The protein localises to the membrane. The catalysed reaction is O-phospho-L-seryl-[protein] + H2O = L-seryl-[protein] + phosphate. It catalyses the reaction O-phospho-L-threonyl-[protein] + H2O = L-threonyl-[protein] + phosphate. Its function is as follows. May be involved in regulation of cell cycle. The sequence is that of Protein phosphatase 1G (Ppm1g) from Mus musculus (Mouse).